Here is a 695-residue protein sequence, read N- to C-terminus: DUF724 domain-containing protein 3 (695 aa).

Residues 376 to 464 (ITVTPLKQQD…GTSDTIRVDD (89 aa)) are disordered. Over residues 384–402 (QDAETEGKKSPKKTPEPVK) the composition is skewed to basic and acidic residues. Over residues 434 to 459 (NQNSNLNETDETCNVSKAGVNGTSDT) the composition is skewed to polar residues. The DUF724 domain occupies 509–694 (PFTKNLPFWK…LEFITSVLAP (186 aa)). Residues 614-684 (VEERKCLEKR…TIDQEIANVE (71 aa)) adopt a coiled-coil conformation.

As to quaternary structure, homodimer.

May be involved in the polar growth of plant cells via transportation of RNAs. This Arabidopsis thaliana (Mouse-ear cress) protein is DUF724 domain-containing protein 3.